The chain runs to 449 residues: Myb-related protein Pp1 (449 aa).

In terms of domain architecture, HTH myb-type spans 1–30 (LGNRWSAIAIPRRTDNEIKNYWNTHLKKRL). Residues 5–26 (WSAIAIPRRTDNEIKNYWNTHL) constitute a DNA-binding region (H-T-H motif).

It is found in the nucleus. Its function is as follows. Possible transcription activator. This chain is Myb-related protein Pp1 (PP1), found in Physcomitrium patens (Spreading-leaved earth moss).